The following is a 257-amino-acid chain: Imidazole glycerol phosphate synthase subunit HisF (257 aa).

Active-site residues include D11 and D130.

This sequence belongs to the HisA/HisF family. As to quaternary structure, heterodimer of HisH and HisF.

It is found in the cytoplasm. It catalyses the reaction 5-[(5-phospho-1-deoxy-D-ribulos-1-ylimino)methylamino]-1-(5-phospho-beta-D-ribosyl)imidazole-4-carboxamide + L-glutamine = D-erythro-1-(imidazol-4-yl)glycerol 3-phosphate + 5-amino-1-(5-phospho-beta-D-ribosyl)imidazole-4-carboxamide + L-glutamate + H(+). It participates in amino-acid biosynthesis; L-histidine biosynthesis; L-histidine from 5-phospho-alpha-D-ribose 1-diphosphate: step 5/9. Functionally, IGPS catalyzes the conversion of PRFAR and glutamine to IGP, AICAR and glutamate. The HisF subunit catalyzes the cyclization activity that produces IGP and AICAR from PRFAR using the ammonia provided by the HisH subunit. The polypeptide is Imidazole glycerol phosphate synthase subunit HisF (Shewanella denitrificans (strain OS217 / ATCC BAA-1090 / DSM 15013)).